The following is a 1758-amino-acid chain: RanBP2-like and GRIP domain-containing protein 3 (1758 aa).

At S21 the chain carries Phosphoserine. One copy of the TPR 1 repeat lies at 60-93 (PRAHRFLGLLYELEENTEKAVECYRRSVELNPTQ). Positions 176-229 (RSTKRLKDAVARCHEAERNIALRSSLEWNSCVVQTLKEYLESLQCLESDKSDWR) form a coiled coil. The TPR 2 repeat unit spans residues 584–617 (QKMGSGLNSFYDQREYIGRSVHYWKKVLPLLKII). The tract at residues 761–805 (GPLYKNGSLRNADSEIKHSTPSPTKYSLSPSKSYKYSPKTPPRWA) is disordered. A compositionally biased stretch (low complexity) spans 779–798 (STPSPTKYSLSPSKSYKYSP). Residues 805–837 (AEDQNSLLKMIRQEVKAIKEEMQELKLNSSKSA) adopt a coiled-coil conformation. The 137-residue stretch at 1037–1173 (HFEPVVQMPE…FEECQRLLLD (137 aa)) folds into the RanBD1 1 domain. Disordered stretches follow at residues 1216-1248 (VAEE…PTLE), 1307-1335 (AKLN…GQYF), and 1581-1622 (NNSE…KNLS). Polar residues predominate over residues 1236–1245 (IKPNAENTGP). A compositionally biased stretch (acidic residues) spans 1318–1330 (TDEESDVTQEEER). The RanBD1 2 domain maps to 1334–1470 (YFEPVVPLPD…FDEAKTAQEK (137 aa)). Polar residues predominate over residues 1581–1594 (NNSETSSVAQSGSE). Positions 1595–1618 (SKVEPKKCELSKNSDIEQSSDSKV) are enriched in basic and acidic residues. A GRIP domain is found at 1703 to 1753 (QEVSAANVEHLKNVLLQFIFLKPGSERERLLPVINTMLQLSLEEKGKLAAV).

In Homo sapiens (Human), this protein is RanBP2-like and GRIP domain-containing protein 3 (RGPD3).